The following is a 454-amino-acid chain: Putative flavin-containing monoamine oxidase AofH (454 aa).

Belongs to the flavin monoamine oxidase family. Requires FAD as cofactor.

The sequence is that of Putative flavin-containing monoamine oxidase AofH (aofH) from Mycobacterium tuberculosis (strain CDC 1551 / Oshkosh).